Here is a 185-residue protein sequence, read N- to C-terminus: Ribosome-recycling factor (185 aa).

Belongs to the RRF family.

It is found in the cytoplasm. Functionally, responsible for the release of ribosomes from messenger RNA at the termination of protein biosynthesis. May increase the efficiency of translation by recycling ribosomes from one round of translation to another. This Campylobacter jejuni subsp. doylei (strain ATCC BAA-1458 / RM4099 / 269.97) protein is Ribosome-recycling factor.